The primary structure comprises 300 residues: 4-hydroxy-tetrahydrodipicolinate synthase (300 aa).

Thr-53 contacts pyruvate. Tyr-141 (proton donor/acceptor) is an active-site residue. The active-site Schiff-base intermediate with substrate is Lys-169. Residue Thr-211 participates in pyruvate binding.

This sequence belongs to the DapA family. In terms of assembly, homotetramer; dimer of dimers.

It localises to the cytoplasm. The catalysed reaction is L-aspartate 4-semialdehyde + pyruvate = (2S,4S)-4-hydroxy-2,3,4,5-tetrahydrodipicolinate + H2O + H(+). Its pathway is amino-acid biosynthesis; L-lysine biosynthesis via DAP pathway; (S)-tetrahydrodipicolinate from L-aspartate: step 3/4. Catalyzes the condensation of (S)-aspartate-beta-semialdehyde [(S)-ASA] and pyruvate to 4-hydroxy-tetrahydrodipicolinate (HTPA). The protein is 4-hydroxy-tetrahydrodipicolinate synthase of Rickettsia massiliae (strain Mtu5).